A 240-amino-acid chain; its full sequence is Proteasome subunit alpha (240 aa).

The protein belongs to the peptidase T1A family. In terms of assembly, the 20S proteasome core is composed of 14 alpha and 14 beta subunits that assemble into four stacked heptameric rings, resulting in a barrel-shaped structure. The two inner rings, each composed of seven catalytic beta subunits, are sandwiched by two outer rings, each composed of seven alpha subunits. The catalytic chamber with the active sites is on the inside of the barrel. Has a gated structure, the ends of the cylinder being occluded by the N-termini of the alpha-subunits. Is capped at one or both ends by the proteasome regulatory ATPase, PAN.

Its subcellular location is the cytoplasm. The formation of the proteasomal ATPase PAN-20S proteasome complex, via the docking of the C-termini of PAN into the intersubunit pockets in the alpha-rings, triggers opening of the gate for substrate entry. Interconversion between the open-gate and close-gate conformations leads to a dynamic regulation of the 20S proteasome proteolysis activity. Functionally, component of the proteasome core, a large protease complex with broad specificity involved in protein degradation. This Metallosphaera sedula (strain ATCC 51363 / DSM 5348 / JCM 9185 / NBRC 15509 / TH2) protein is Proteasome subunit alpha.